The primary structure comprises 628 residues: Patulin synthase (628 aa).

The N-terminal stretch at M1–A20 is a signal peptide. N48 carries N-linked (GlcNAc...) asparagine glycosylation. Residues T60–A61 and E81–A82 contribute to the FAD site. N92 carries N-linked (GlcNAc...) asparagine glycosylation. N147–A150 is an FAD binding site. N-linked (GlcNAc...) asparagine glycosylation is found at N197, N260, N386, N429, and N486. H564 functions as the Proton acceptor in the catalytic mechanism. FAD contacts are provided by residues A598 and P609–Q610.

Belongs to the GMC oxidoreductase family. In terms of assembly, homodimer. Requires FAD as cofactor.

The protein localises to the cytoplasm. It is found in the cell cortex. Its subcellular location is the vacuole. The protein resides in the secreted. It localises to the cell wall. The enzyme catalyses (E)-ascladiol + A = patulin + AH2. It functions in the pathway mycotoxin biosynthesis; patulin biosynthesis. Its function is as follows. Patulin synthase; part of the gene cluster that mediates the biosynthesis of patulin, an acetate-derived tetraketide mycotoxin produced by several fungal species that shows antimicrobial properties against several bacteria. PatE catalyzes the last step of the pathway which is the conversion of E-ascladiol to patulin. The pathway begins with the synthesis of 6-methylsalicylic acid by the polyketide synthase (PKS) patK via condensation of acetate and malonate units. The 6-methylsalicylic acid decarboxylase patG then catalyzes the decarboxylation of 6-methylsalicylic acid to yield m-cresol (also known as 3-methylphenol). These first reactions occur in the cytosol. The intermediate m-cresol is then transported into the endoplasmic reticulum where the cytochrome P450 monooxygenase patH converts it to m-hydroxybenzyl alcohol, which is further converted to gentisyl alcohol by the cytochrome P450 monooxygenase patI. The oxidoreductases patJ and patO further convert gentisyl alcohol to isoepoxydon in the vacuole. PatN catalyzes then the transformation of isoepoxydon into phyllostine. The cluster protein patF is responsible for the conversion from phyllostine to neopatulin whereas the alcohol dehydrogenase patD converts neopatulin to E-ascladiol. The steps between isoepoxydon and E-ascladiol occur in the cytosol, and E-ascladiol is probably secreted to the extracellular space by one of the cluster-specific transporters patC or patM. Finally, the secreted patulin synthase patE catalyzes the conversion of E-ascladiol to patulin. This chain is Patulin synthase, found in Aspergillus clavatus (strain ATCC 1007 / CBS 513.65 / DSM 816 / NCTC 3887 / NRRL 1 / QM 1276 / 107).